The primary structure comprises 243 residues: Protein GIGAS CELL1 (243 aa).

Interacts with APC/C activators such as FZR1, FZR2, FZR3, CDC20.1 and CDC20.5. In terms of processing, phosphorylated by CDKA-1 in complex with CYCA1-2. As to expression, expressed in rapidly dividing tissues such as shoot apical meristem and young leaves. Associated with cell division but also with specific cell types.

In terms of biological role, negative regulator of the anaphase-promoting complex/cyclosome (APC/C) ubiquitin ligase required for proper mitotic and meiotic progression and cell fate determination. Involved in entry into both meiosis I and meiosis II. Prevents endomitosis by preferentially inhibiting APC/C(CDC20). Required for megagametophyte and endosperm development. Triggers mitotic cyclins (e.g. CYCB1-1 and CYCB1-2) accumulation. Confers immunity to bacterial pathogens (e.g. Pseudomonas syringae pv. tomato DC3000), which is associated with increased expression of disease resistance (R) genes. GIG1 and PANS1 are part of a network linking centromere cohesion and cell cycle progression through control of APC/C activity. This Arabidopsis thaliana (Mouse-ear cress) protein is Protein GIGAS CELL1 (GIG1).